We begin with the raw amino-acid sequence, 122 residues long: Large ribosomal subunit protein uL14 (122 aa).

It belongs to the universal ribosomal protein uL14 family. In terms of assembly, part of the 50S ribosomal subunit. Forms a cluster with proteins L3 and L19. In the 70S ribosome, L14 and L19 interact and together make contacts with the 16S rRNA in bridges B5 and B8.

Functionally, binds to 23S rRNA. Forms part of two intersubunit bridges in the 70S ribosome. The polypeptide is Large ribosomal subunit protein uL14 (Hyphomonas neptunium (strain ATCC 15444)).